The primary structure comprises 451 residues: Glycine--tRNA ligase (451 aa).

Residues arginine 94 and glutamate 164 each coordinate substrate. ATP contacts are provided by residues 196–198 (RNE), 206–211 (FRTREF), 281–282 (EL), and 325–328 (GVER). 211–215 (FEQME) is a binding site for substrate. Position 321–325 (321–325 (EPSVG)) interacts with substrate.

It belongs to the class-II aminoacyl-tRNA synthetase family. Homodimer.

It localises to the cytoplasm. It carries out the reaction tRNA(Gly) + glycine + ATP = glycyl-tRNA(Gly) + AMP + diphosphate. Functionally, catalyzes the attachment of glycine to tRNA(Gly). This is Glycine--tRNA ligase from Mesoplasma florum (strain ATCC 33453 / NBRC 100688 / NCTC 11704 / L1) (Acholeplasma florum).